The chain runs to 398 residues: Small ribosomal subunit protein uS3m (398 aa).

The protein belongs to the universal ribosomal protein uS3 family. As to quaternary structure, component of the mitochondrial small ribosomal subunit (mt-SSU). Mature yeast 74S mitochondrial ribosomes consist of a small (37S) and a large (54S) subunit. The 37S small subunit contains a 15S ribosomal RNA (15S mt-rRNA) and 34 different proteins. The 54S large subunit contains a 21S rRNA (21S mt-rRNA) and 46 different proteins. uS3m, uS4m and uS5m form the narrow entry site of the mRNA channel.

It is found in the mitochondrion. In terms of biological role, component of the mitochondrial ribosome (mitoribosome), a dedicated translation machinery responsible for the synthesis of mitochondrial genome-encoded proteins, including at least some of the essential transmembrane subunits of the mitochondrial respiratory chain. The mitoribosomes are attached to the mitochondrial inner membrane and translation products are cotranslationally integrated into the membrane. uS3m is essential for mitochondrial protein synthesis and required for the maturation of small ribosomal subunits. The polypeptide is Small ribosomal subunit protein uS3m (VAR1) (Saccharomyces cerevisiae (strain ATCC 204508 / S288c) (Baker's yeast)).